The chain runs to 85 residues: Neurtoxin 10 (85 aa).

Residues 1 to 23 (MKFCVAVSLLIIASMAGVISVSG) form the signal peptide. The 62-residue stretch at 24–85 (YDVYPRDYAE…NFLSVIWKHC (62 aa)) folds into the LCN-type CS-alpha/beta domain. 3 disulfide bridges follow: Cys38–Cys60, Cys46–Cys65, and Cys50–Cys67.

Belongs to the long (3 C-C) scorpion toxin superfamily. As to expression, expressed by the venom gland.

It is found in the secreted. In Lychas mucronatus (Chinese swimming scorpion), this protein is Neurtoxin 10.